The chain runs to 268 residues: Tryptophan synthase alpha chain (268 aa).

Active-site proton acceptor residues include Glu49 and Asp60.

Belongs to the TrpA family. In terms of assembly, tetramer of two alpha and two beta chains.

The catalysed reaction is (1S,2R)-1-C-(indol-3-yl)glycerol 3-phosphate + L-serine = D-glyceraldehyde 3-phosphate + L-tryptophan + H2O. It functions in the pathway amino-acid biosynthesis; L-tryptophan biosynthesis; L-tryptophan from chorismate: step 5/5. Its function is as follows. The alpha subunit is responsible for the aldol cleavage of indoleglycerol phosphate to indole and glyceraldehyde 3-phosphate. In Shigella sonnei (strain Ss046), this protein is Tryptophan synthase alpha chain.